Reading from the N-terminus, the 269-residue chain is Putative pyruvate, phosphate dikinase regulatory protein (269 aa).

Position 151–158 (151–158 (GVSRSSKT)) interacts with ADP.

The protein belongs to the pyruvate, phosphate/water dikinase regulatory protein family. PDRP subfamily.

It carries out the reaction N(tele)-phospho-L-histidyl/L-threonyl-[pyruvate, phosphate dikinase] + ADP = N(tele)-phospho-L-histidyl/O-phospho-L-threonyl-[pyruvate, phosphate dikinase] + AMP + H(+). The catalysed reaction is N(tele)-phospho-L-histidyl/O-phospho-L-threonyl-[pyruvate, phosphate dikinase] + phosphate + H(+) = N(tele)-phospho-L-histidyl/L-threonyl-[pyruvate, phosphate dikinase] + diphosphate. Its function is as follows. Bifunctional serine/threonine kinase and phosphorylase involved in the regulation of the pyruvate, phosphate dikinase (PPDK) by catalyzing its phosphorylation/dephosphorylation. In Geobacter metallireducens (strain ATCC 53774 / DSM 7210 / GS-15), this protein is Putative pyruvate, phosphate dikinase regulatory protein.